Reading from the N-terminus, the 148-residue chain is Large ribosomal subunit protein uL15 (148 aa).

The tract at residues 1-61 (MELNNLKPAI…GGQMPMQRRL (61 aa)) is disordered. The segment covering 30-39 (TATKGHKGQK) has biased composition (basic residues).

Belongs to the universal ribosomal protein uL15 family. As to quaternary structure, part of the 50S ribosomal subunit.

Binds to the 23S rRNA. In Geobacter metallireducens (strain ATCC 53774 / DSM 7210 / GS-15), this protein is Large ribosomal subunit protein uL15.